The sequence spans 1044 residues: R3H domain-containing protein 2 (1044 aa).

Disordered regions lie at residues 23–71 (EESV…AKSN) and 106–147 (SCPS…QEYT). The span at 36–56 (PSKEDVEKEGEENGLRQETQR) shows a compositional bias: basic and acidic residues. A Phosphoserine modification is found at serine 37. Residues 58 to 71 (TSSHGHARKRAKSN) show a composition bias toward basic residues. Over residues 109–143 (SDKEEEKSTKDVSEKEDKDKSKEKVPRKMLSRDSS) the composition is skewed to basic and acidic residues. Phosphoserine is present on serine 143. One can recognise an R3H domain in the interval 169 to 232 (RMMLLKLEQE…AVIINKTSST (64 aa)). An SUZ domain is found at 233 to 303 (RIPEQRFSEH…VRERIFARET (71 aa)). Composition is skewed to basic and acidic residues over residues 261–270 (DASMDRDDNQ) and 277–288 (DGRRSKSIEERE). Disordered regions lie at residues 261–288 (DASM…EERE), 320–408 (SSSS…LSRP), 433–485 (CTAQ…FSPS), 502–533 (MAED…LFQP), 551–600 (GQPL…SNQQ), 729–770 (GTSP…SPSG), and 807–848 (GQKP…SLSN). Residues 338 to 349 (SRTSSSRQSSTD) are compositionally biased toward low complexity. Phosphoserine occurs at positions 362, 365, and 381. The segment covering 433-449 (CTAQQQQQQQQQQQQLP) has biased composition (low complexity). Polar residues-rich tracts occupy residues 509-521 (PFGQ…QGST) and 554-572 (LPTS…QQVL). The segment covering 757–770 (PQMSQQYSGVSPSG) has biased composition (low complexity). Positions 818 to 848 (GSPQANAQMGSSPVTSPTQSPAPSPVTSLSN) are enriched in polar residues. Phosphoserine is present on residues serine 921 and serine 923. Phosphothreonine occurs at positions 924 and 928.

The protein resides in the nucleus. In Mus musculus (Mouse), this protein is R3H domain-containing protein 2 (R3hdm2).